The chain runs to 189 residues: Small ribosomal subunit protein uS5 (189 aa).

The 64-residue stretch at 20-83 (FMDRLVHINR…ESAKRSLIRV (64 aa)) folds into the S5 DRBM domain.

This sequence belongs to the universal ribosomal protein uS5 family. As to quaternary structure, part of the 30S ribosomal subunit. Contacts proteins S4 and S8.

Functionally, with S4 and S12 plays an important role in translational accuracy. Located at the back of the 30S subunit body where it stabilizes the conformation of the head with respect to the body. This Methylocella silvestris (strain DSM 15510 / CIP 108128 / LMG 27833 / NCIMB 13906 / BL2) protein is Small ribosomal subunit protein uS5.